We begin with the raw amino-acid sequence, 905 residues long: Clumping factor B (905 aa).

Positions 1–44 (MKKRIDYLSNKQNKYSIRRFTVGTTSVIVGATILFGIGNHQAQA) are cleaved as a signal peptide. Residues 15 to 26 (YSIRRFTVGTTS) carry the YSIRK-G/S signaling motif motif. 2 stretches are compositionally biased toward polar residues: residues 44–61 (ASEQ…NASA) and 68–101 (MIET…KPMS). Residues 44-191 (ASEQSNDTTQ…AQGTSKPSVR (148 aa)) form a disordered region. The interval 45–542 (SEQSNDTTQS…GSADGDSAVN (498 aa)) is ligand binding A region. Over residues 102 to 119 (TQTSNTTTTEPASTNETP) the composition is skewed to low complexity. A compositionally biased stretch (polar residues) spans 134–189 (QDQTVPQEANSQVDNKTTNDANSIATNSELKNPQTLDLPQSSPQTISNAQGTSKPS). The MIDAS-like motif motif lies at 272–276 (DYSNS). The disordered stretch occupies residues 530–877 (YGGGSADGDS…ETGDKSENTN (348 aa)). Positions 545–555 (DPTPGPPVDPE) are enriched in pro residues. A compositionally biased stretch (acidic residues) spans 556 to 829 (PSPDPEPEPS…SDSDSDSDSD (274 aa)). A compositionally biased stretch (polar residues) spans 833–844 (RVTPPNNEQKAP). Over residues 861–874 (HKTDALPETGDKSE) the composition is skewed to basic and acidic residues. The LPXTG sorting signal signature appears at 866 to 870 (LPETG). The residue at position 869 (Thr869) is a Pentaglycyl murein peptidoglycan amidated threonine. Residues 870–905 (GDKSENTNATLFGAMMALLGSLLLFRKRKQDHKEKA) constitute a propeptide, removed by sortase.

The protein belongs to the serine-aspartate repeat-containing protein (SDr) family. Proteolytically cleaved by aureolysin (aur). This cleavage leads to the inactivation of ClfB.

It localises to the secreted. It is found in the cell wall. In terms of biological role, cell surface-associated protein implicated in virulence by promoting bacterial attachment to both alpha- and beta-chains of human fibrinogen and inducing the formation of bacterial clumps. This is Clumping factor B (clfB) from Staphylococcus aureus (strain MSSA476).